The chain runs to 389 residues: Chalcone synthase 9 (389 aa).

Cysteine 164 is an active-site residue.

It belongs to the thiolase-like superfamily. Chalcone/stilbene synthases family.

It catalyses the reaction (E)-4-coumaroyl-CoA + 3 malonyl-CoA + 3 H(+) = 2',4,4',6'-tetrahydroxychalcone + 3 CO2 + 4 CoA. Its pathway is secondary metabolite biosynthesis; flavonoid biosynthesis. In terms of biological role, the primary product of this enzyme is 4,2',4',6'-tetrahydroxychalcone (also termed naringenin-chalcone or chalcone) which can under specific conditions spontaneously isomerize into naringenin. This chain is Chalcone synthase 9 (CHS9), found in Daucus carota (Wild carrot).